Here is a 447-residue protein sequence, read N- to C-terminus: GTPase Der (447 aa).

2 EngA-type G domains span residues 3 to 167 and 180 to 353; these read PVIA…QLPE and IRLA…KAAT. Residues 9–16, 56–60, 119–122, 186–193, 233–237, and 298–301 contribute to the GTP site; these read GRPNVGKS, DTGGF, NKAE, DTAGL, and NKWD. Residues 353 to 438 form the KH-like domain; sequence TCKMPTPVLT…PLRIEMKTSR (86 aa).

The protein belongs to the TRAFAC class TrmE-Era-EngA-EngB-Septin-like GTPase superfamily. EngA (Der) GTPase family. In terms of assembly, associates with the 50S ribosomal subunit.

Functionally, GTPase that plays an essential role in the late steps of ribosome biogenesis. The chain is GTPase Der from Paracidovorax citrulli (strain AAC00-1) (Acidovorax citrulli).